Here is a 511-residue protein sequence, read N- to C-terminus: AMP phosphorylase (511 aa).

Residues Gly168, 194-199 (SRAITS), and Thr203 contribute to the AMP site. Residue Asp256 is the Proton donor of the active site. AMP-binding residues include Ser262 and Lys286.

Belongs to the thymidine/pyrimidine-nucleoside phosphorylase family. Type 2 subfamily.

The catalysed reaction is AMP + phosphate = alpha-D-ribose 1,5-bisphosphate + adenine. The enzyme catalyses CMP + phosphate = cytosine + alpha-D-ribose 1,5-bisphosphate. It catalyses the reaction UMP + phosphate = alpha-D-ribose 1,5-bisphosphate + uracil. Its function is as follows. Catalyzes the conversion of AMP and phosphate to adenine and ribose 1,5-bisphosphate (R15P). Exhibits phosphorylase activity toward CMP and UMP in addition to AMP. Functions in an archaeal AMP degradation pathway, together with R15P isomerase and RubisCO. This Thermofilum pendens (strain DSM 2475 / Hrk 5) protein is AMP phosphorylase.